Reading from the N-terminus, the 203-residue chain is EVTKPETINYRTLKPEMDGLFCERIFGPAKDWECHCGKYKRVRHRGIVCERCGVEVTESRVRRHRMGYIKLAAPVTHVWYLKGIPSYISILLDMPLRDVEQIVYFNSYVVLDPGNHPELQTKQLLTEDQSMELEDQIYAEDSTLEGIEVGIGAEALERLLQDLELEQDAERLREEINSAKGQKRAKLIKRLRVVDNFVATGSH.

Cys-34, Cys-36, Cys-49, and Cys-52 together coordinate Zn(2+).

It belongs to the RNA polymerase beta' chain family. RpoC1 subfamily. In cyanobacteria the RNAP catalytic core is composed of 2 alpha, 1 beta, 1 beta', 1 gamma and 1 omega subunit. When a sigma factor is associated with the core the holoenzyme is formed, which can initiate transcription. Zn(2+) serves as cofactor.

It catalyses the reaction RNA(n) + a ribonucleoside 5'-triphosphate = RNA(n+1) + diphosphate. DNA-dependent RNA polymerase catalyzes the transcription of DNA into RNA using the four ribonucleoside triphosphates as substrates. The sequence is that of DNA-directed RNA polymerase subunit gamma (rpoC1) from Prochlorothrix hollandica.